The sequence spans 689 residues: Pentatricopeptide repeat-containing protein At2g03380, mitochondrial (689 aa).

The N-terminal 12 residues, 1–12 (MLRSITLSPTRR), are a transit peptide targeting the mitochondrion. 16 PPR repeats span residues 75-105 (DISIATKLVSLYGFFGYTKDARLVFDQIPEP), 106-140 (DFYLWKVMLRCYCLNKESVEVVKLYDLLMKHGFRY), 141-171 (DDIVFSKALKACTELQDLDNGKKIHCQLVKV), 175-205 (DNVVLTGLLDMYAKCGEIKSAHKVFNDITLR), 206-240 (NVVCWTSMIAGYVKNDLCEEGLVLFNRMRENNVLG), 241-275 (NEYTYGTLIMACTKLSALHQGKWFHGCLVKSGIEL), 276-306 (SSCLVTSLLDMYVKCGDISNARRVFNEHSHV), 307-341 (DLVMWTAMIVGYTHNGSVNEALSLFQKMKGVEIKP), 342-372 (NCVTIASVLSGCGLIENLELGRSVHGLSIKV), 376-406 (DTNVANALVHMYAKCYQNRDAKYVFEMESEK), 407-441 (DIVAWNSIISGFSQNGSIHEALFLFHRMNSESVTP), 442-476 (NGVTVASLFSACASLGSLAVGSSLHAYSVKLGFLA), 479-509 (SVHVGTALLDFYAKCGDPQSARLIFDTIEEK), 510-544 (NTITWSAMIGGYGKQGDTIGSLELFEEMLKKQQKP), 545-580 (NESTFTSILSACGHTGMVNEGKKYFSSMYKDYNFTP), and 581-611 (STKHYTCMVDMLARAGELEQALDIIEKMPIQ). Residues 616-689 (CFGAFLHGCG…SKIAGHSTME (74 aa)) form a type E motif; degenerate region.

It belongs to the PPR family. PCMP-E subfamily.

The protein localises to the mitochondrion. The sequence is that of Pentatricopeptide repeat-containing protein At2g03380, mitochondrial (PCMP-E47) from Arabidopsis thaliana (Mouse-ear cress).